Reading from the N-terminus, the 637-residue chain is 1-deoxy-D-xylulose-5-phosphate synthase (637 aa).

Residues His-88 and 129 to 131 (GHS) contribute to the thiamine diphosphate site. Position 160 (Asp-160) interacts with Mg(2+). Thiamine diphosphate is bound by residues 161 to 162 (GA), Asn-189, Phe-293, and Glu-370. Residue Asn-189 participates in Mg(2+) binding.

Belongs to the transketolase family. DXPS subfamily. As to quaternary structure, homodimer. The cofactor is Mg(2+). Thiamine diphosphate is required as a cofactor.

It carries out the reaction D-glyceraldehyde 3-phosphate + pyruvate + H(+) = 1-deoxy-D-xylulose 5-phosphate + CO2. It participates in metabolic intermediate biosynthesis; 1-deoxy-D-xylulose 5-phosphate biosynthesis; 1-deoxy-D-xylulose 5-phosphate from D-glyceraldehyde 3-phosphate and pyruvate: step 1/1. Catalyzes the acyloin condensation reaction between C atoms 2 and 3 of pyruvate and glyceraldehyde 3-phosphate to yield 1-deoxy-D-xylulose-5-phosphate (DXP). In Acinetobacter baumannii (strain AYE), this protein is 1-deoxy-D-xylulose-5-phosphate synthase.